The chain runs to 316 residues: Ribosomal protein L11 methyltransferase (316 aa).

S-adenosyl-L-methionine-binding residues include Thr-157, Gly-178, Asp-200, and Asn-243.

Belongs to the methyltransferase superfamily. PrmA family.

The protein localises to the cytoplasm. The enzyme catalyses L-lysyl-[protein] + 3 S-adenosyl-L-methionine = N(6),N(6),N(6)-trimethyl-L-lysyl-[protein] + 3 S-adenosyl-L-homocysteine + 3 H(+). Its function is as follows. Methylates ribosomal protein L11. In Streptococcus pneumoniae (strain 70585), this protein is Ribosomal protein L11 methyltransferase.